We begin with the raw amino-acid sequence, 220 residues long: Metalloproteinase inhibitor 2 (220 aa).

The first 26 residues, 1–26, serve as a signal peptide directing secretion; it reads MGAAARTLRLALGLLLLATLLRPADA. A Zn(2+)-binding site is contributed by cysteine 27. 2 involved in metalloproteinase-binding regions span residues 27–30 and 95–96; these read CSCS and SA. Cystine bridges form between cysteine 27-cysteine 98, cysteine 29-cysteine 127, cysteine 39-cysteine 152, cysteine 154-cysteine 201, cysteine 159-cysteine 164, and cysteine 172-cysteine 193. The NTR domain maps to 27 to 152; sequence CSCSPVHPQQ…SLNHRYQMGC (126 aa).

It belongs to the protease inhibitor I35 (TIMP) family. As to quaternary structure, interacts (via the C-terminal) with MMP2 (via the C-terminal PEX domain); the interaction inhibits the MMP2 activity. In terms of processing, the activity of TIMP2 is dependent on the presence of disulfide bonds.

Its subcellular location is the secreted. Functionally, complexes with metalloproteinases (such as collagenases) and irreversibly inactivates them by binding to their catalytic zinc cofactor. Known to act on MMP-1, MMP-2, MMP-3, MMP-7, MMP-8, MMP-9, MMP-10, MMP-13, MMP-14, MMP-15, MMP-16 and MMP-19. The polypeptide is Metalloproteinase inhibitor 2 (TIMP2) (Homo sapiens (Human)).